The following is a 553-amino-acid chain: Dihydroxy-acid dehydratase (553 aa).

Aspartate 78 provides a ligand contact to Mg(2+). Position 119 (cysteine 119) interacts with [2Fe-2S] cluster. The Mg(2+) site is built by aspartate 120 and lysine 121. Residue lysine 121 is modified to N6-carboxylysine. Cysteine 192 contributes to the [2Fe-2S] cluster binding site. Glutamate 442 is a binding site for Mg(2+). Serine 468 (proton acceptor) is an active-site residue.

The protein belongs to the IlvD/Edd family. In terms of assembly, homodimer. The cofactor is [2Fe-2S] cluster. It depends on Mg(2+) as a cofactor.

It carries out the reaction (2R)-2,3-dihydroxy-3-methylbutanoate = 3-methyl-2-oxobutanoate + H2O. It catalyses the reaction (2R,3R)-2,3-dihydroxy-3-methylpentanoate = (S)-3-methyl-2-oxopentanoate + H2O. It functions in the pathway amino-acid biosynthesis; L-isoleucine biosynthesis; L-isoleucine from 2-oxobutanoate: step 3/4. The protein operates within amino-acid biosynthesis; L-valine biosynthesis; L-valine from pyruvate: step 3/4. In terms of biological role, functions in the biosynthesis of branched-chain amino acids. Catalyzes the dehydration of (2R,3R)-2,3-dihydroxy-3-methylpentanoate (2,3-dihydroxy-3-methylvalerate) into 2-oxo-3-methylpentanoate (2-oxo-3-methylvalerate) and of (2R)-2,3-dihydroxy-3-methylbutanoate (2,3-dihydroxyisovalerate) into 2-oxo-3-methylbutanoate (2-oxoisovalerate), the penultimate precursor to L-isoleucine and L-valine, respectively. This is Dihydroxy-acid dehydratase from Campylobacter hominis (strain ATCC BAA-381 / DSM 21671 / CCUG 45161 / LMG 19568 / NCTC 13146 / CH001A).